The sequence spans 600 residues: MAVSTQQLAEELQIFGLDYEDSLLEKLAELCVLYRQTEDGMVSELIAFCTSAGKTCLTVDILNSFEYEVLNKKLSKAWHSASKDSGHAGTRDIVSIQELIEAEEEEETLLSSYTTPSKGPLKRVSSTPETPLTKRSVAARSPRQLLSPSSFSPSATPSQKYTSRTNRGEVVTTFGSAQGLSWSGRGGSGSVSLKVVGDPEPLTGSYKAMFQQLMGVREVLTSKIEELGSELKEHHKIEAFTPLLVPAQEPVILLGQIGCDSNGKLNSKSVILEGDQEHSYGAQIPVDLSELKEYSLFPGQVVIMEGFNTTGRRLTATKLYEGVPLPFYQPTEEEGASEQTMVVVACGPYTTSDSITYDPLLDLIAIINRDQPDVCILFGPFLDAKHEQVENCKLTSPFEDVFKQCLRTVIEGTRSSGSHLVFVPSLRDVHHEPVYPQPPFTFSELSREDKKRVQFVSEPCSLSINGVMFGLTSTDLLFHIGAEEIFSSSGTSDRFSRVLKHILTQRSYYPLYPPHEDMAIDYENFYTYAQLPVTPDVFIVPSELRYFVKDIFGCVCVNPGRLTKGQVGGTFGRLYLRRQPKAMDGGGRQGLSVAAQVVRI.

Residues 107-165 form a disordered region; sequence ETLLSSYTTPSKGPLKRVSSTPETPLTKRSVAARSPRQLLSPSSFSPSATPSQKYTSRT. Ser-126 carries the phosphoserine modification. 2 positions are modified to phosphothreonine: Thr-127 and Thr-130. Residues 139–159 show a composition bias toward low complexity; it reads ARSPRQLLSPSSFSPSATPSQ. Phosphoserine occurs at positions 141, 147, 152, and 154.

It belongs to the DNA polymerase alpha subunit B family. In terms of assembly, component of the alpha DNA polymerase complex (also known as the alpha DNA polymerase-primase complex) consisting of four subunits: the catalytic subunit POLA1, the regulatory subunit POLA2, and the primase complex subunits PRIM1 and PRIM2 respectively. Within the complex, POLA1 directly interacts with PRIM2. In terms of processing, phosphorylated in a cell cycle-dependent manner, in G2/M phase.

It localises to the nucleus. Functionally, accessory subunit of the DNA polymerase alpha complex (also known as the alpha DNA polymerase-primase complex) which plays an essential role in the initiation of DNA synthesis. During the S phase of the cell cycle, the DNA polymerase alpha complex (composed of a catalytic subunit POLA1, an accessory subunit POLA2 and two primase subunits, the catalytic subunit PRIM1 and the regulatory subunit PRIM2) is recruited to DNA at the replicative forks via direct interactions with MCM10 and WDHD1. The primase subunit of the polymerase alpha complex initiates DNA synthesis by oligomerising short RNA primers on both leading and lagging strands. These primers are initially extended by the polymerase alpha catalytic subunit and subsequently transferred to polymerase delta and polymerase epsilon for processive synthesis on the lagging and leading strand, respectively. The polypeptide is DNA polymerase alpha subunit B (Pola2) (Mus musculus (Mouse)).